Here is a 491-residue protein sequence, read N- to C-terminus: Protein nucleotidyltransferase YdiU (491 aa).

Positions 92, 94, 95, 115, 127, 128, 178, and 185 each coordinate ATP. Residue Asp254 is the Proton acceptor of the active site. Mg(2+) is bound by residues Asn255 and Asp264. Asp264 lines the ATP pocket.

Belongs to the SELO family. Requires Mg(2+) as cofactor. Mn(2+) serves as cofactor.

It carries out the reaction L-seryl-[protein] + ATP = 3-O-(5'-adenylyl)-L-seryl-[protein] + diphosphate. The enzyme catalyses L-threonyl-[protein] + ATP = 3-O-(5'-adenylyl)-L-threonyl-[protein] + diphosphate. It catalyses the reaction L-tyrosyl-[protein] + ATP = O-(5'-adenylyl)-L-tyrosyl-[protein] + diphosphate. The catalysed reaction is L-histidyl-[protein] + UTP = N(tele)-(5'-uridylyl)-L-histidyl-[protein] + diphosphate. It carries out the reaction L-seryl-[protein] + UTP = O-(5'-uridylyl)-L-seryl-[protein] + diphosphate. The enzyme catalyses L-tyrosyl-[protein] + UTP = O-(5'-uridylyl)-L-tyrosyl-[protein] + diphosphate. Functionally, nucleotidyltransferase involved in the post-translational modification of proteins. It can catalyze the addition of adenosine monophosphate (AMP) or uridine monophosphate (UMP) to a protein, resulting in modifications known as AMPylation and UMPylation. The sequence is that of Protein nucleotidyltransferase YdiU from Pseudarthrobacter chlorophenolicus (strain ATCC 700700 / DSM 12829 / CIP 107037 / JCM 12360 / KCTC 9906 / NCIMB 13794 / A6) (Arthrobacter chlorophenolicus).